We begin with the raw amino-acid sequence, 316 residues long: Probable cell division protein WhiA (316 aa).

The segment at residues 276–309 is a DNA-binding region (H-T-H motif); it reads SLEELGKIAEPQITKDAIAGRIRRLLQLAEKTEK.

This sequence belongs to the WhiA family.

Its function is as follows. Involved in cell division and chromosome segregation. The sequence is that of Probable cell division protein WhiA from Bifidobacterium longum subsp. infantis (strain ATCC 15697 / DSM 20088 / JCM 1222 / NCTC 11817 / S12).